The sequence spans 404 residues: Spore germination protein YndF (404 aa).

Residues 1–24 (MKSKLKRQLPAMVIVCLLMICVTG) form the signal peptide. Cys-25 carries N-palmitoyl cysteine lipidation. Cys-25 carries S-diacylglycerol cysteine lipidation.

The protein belongs to the GerABKC lipoprotein family.

It localises to the cell membrane. May be involved in spore germination. In Bacillus subtilis (strain 168), this protein is Spore germination protein YndF (yndF).